We begin with the raw amino-acid sequence, 388 residues long: Probable proton-coupled zinc antiporter SLC30A3 (388 aa).

The segment at 1 to 42 (MEPSPASGGSETTRLVSPRDRSSAGGGLRLKSLFTEPSEPLP) is disordered. The Cytoplasmic segment spans residues 1 to 75 (MEPSPASGGS…SPERAQARRQ (75 aa)). Residues Ser-63 and Ser-66 each carry the phosphoserine modification. A helical transmembrane segment spans residues 76–96 (LYAACVVCFIFMAGEVVGGYL). The Lumenal segment spans residues 97–105 (AHSLAIMTD). The helical transmembrane segment at 106-126 (AAHLLADIGSMMASLFSLWLS) threads the bilayer. Residues His-108 and Asp-112 each contribute to the Zn(2+) site. The Cytoplasmic portion of the chain corresponds to 127–145 (TRPATRTMTFGWHRSETLG). Residues 146-166 (ALASVVSLWIVTGILLYLAFL) traverse the membrane as a helical segment. Residues 167–177 (RLLHSDYHIEA) are Lumenal-facing. The helical transmembrane segment at 178–198 (GAMLLTASIAVCANMIMAFVL) threads the bilayer. The Cytoplasmic segment spans residues 199-235 (HQTGAPHSHGPRGAEYAPLEEGHGHPLSLGNTSVRAA). A helical membrane pass occupies residues 236 to 256 (FVHVLGDLLQSLGVLAASILI). Zn(2+)-binding residues include His-238 and Asp-242. Over 257–263 (YFKPQYK) the chain is Lumenal. A helical transmembrane segment spans residues 264–284 (VADPISTFLFSICALGSTAPT). Over 285–388 (LRDVLLVLME…CLRCREPPKA (104 aa)) the chain is Cytoplasmic.

This sequence belongs to the cation diffusion facilitator (CDF) transporter (TC 2.A.4) family. SLC30A subfamily. As to quaternary structure, homodimer. Homodimerization could regulate efficiency of zinc transport. Interacts with TMEM163.

The protein resides in the cytoplasmic vesicle. The protein localises to the secretory vesicle. It is found in the synaptic vesicle membrane. It localises to the synapse. Its subcellular location is the synaptosome. The protein resides in the late endosome membrane. The protein localises to the lysosome membrane. It catalyses the reaction Zn(2+)(in) + 2 H(+)(out) = Zn(2+)(out) + 2 H(+)(in). Its function is as follows. Probable proton-coupled zinc ion antiporter mediating the import of zinc from cytoplasm into synaptic vesicles and participating to cellular zinc ion homeostasis in the brain. The sequence is that of Probable proton-coupled zinc antiporter SLC30A3 from Rattus norvegicus (Rat).